The following is a 456-amino-acid chain: NAD-dependent deacetylase sir2C (456 aa).

Residues 161–443 (IEIENNKIKE…LNLSKLLNWD (283 aa)) enclose the Deacetylase sirtuin-type domain. His294 (proton acceptor) is an active-site residue. 4 residues coordinate Zn(2+): Cys302, Cys305, Cys331, and Cys336.

Belongs to the sirtuin family. Requires Zn(2+) as cofactor.

It carries out the reaction N(6)-acetyl-L-lysyl-[protein] + NAD(+) + H2O = 2''-O-acetyl-ADP-D-ribose + nicotinamide + L-lysyl-[protein]. In terms of biological role, NAD-dependent deacetylase, which plays an important role in the regulation of transcriptional repression. This chain is NAD-dependent deacetylase sir2C (sir2C), found in Dictyostelium discoideum (Social amoeba).